A 1415-amino-acid polypeptide reads, in one-letter code: Non-structural polyprotein 1AB (1415 aa).

Residues 104–142 adopt a coiled-coil conformation; that stretch reads KLIHKANALQERLRLSQEEKATLALDVQFLQHENVRLKE. A run of 5 helical transmembrane segments spans residues 154–174, 239–259, 286–306, 313–333, and 344–364; these read MKWI…GGYA, VFYY…LAIG, VLPT…TLMV, LLAI…LCFM, and GLIA…LTGT. Catalysis depends on charge relay system; for serine protease activity residues histidine 461, aspartate 489, and serine 551. A coiled-coil region spans residues 587-616; it reads VKAPSRVELLKEEIERLKAQLNSAAENPAT. O-(5'-phospho-RNA)-tyrosine is present on tyrosine 693. A disordered region spans residues 753-813; the sequence is FDQAKPTPAP…KNEPQPYSQT (61 aa). Over residues 783–795 the composition is skewed to basic and acidic residues; it reads SQKKEKQLEHEQQ. Residues 800 to 813 show a composition bias toward polar residues; the sequence is TKPQKNEPQPYSQT. Residues 1160–1286 enclose the RdRp catalytic domain; it reads KHFIEFDWTR…TTPSVPDDYE (127 aa).

Belongs to the astroviridae polyprotein 1AB family. Monomer. Post-translationally, cleaved by the viral and host proteases. The protease is probably autocatalytically cleaved.

The protein resides in the host membrane. It carries out the reaction RNA(n) + a ribonucleoside 5'-triphosphate = RNA(n+1) + diphosphate. Its function is as follows. Responsible for the cleavage of the polyprotein into functional products. Covalently attached to the 5' extremity of the genomic and subgenomic RNAs. It may serve as a primer for the replicase. This chain is Non-structural polyprotein 1AB (ORF1), found in Human astrovirus-4 (HAstV-4).